Consider the following 244-residue polypeptide: Small ribosomal subunit protein uS2 (244 aa).

It belongs to the universal ribosomal protein uS2 family.

This is Small ribosomal subunit protein uS2 from Buchnera aphidicola subsp. Schizaphis graminum (strain Sg).